Here is a 440-residue protein sequence, read N- to C-terminus: Xylose isomerase (440 aa).

Catalysis depends on residues His101 and Asp104. The Mg(2+) site is built by Glu232, Glu268, His271, Asp296, Asp307, Asp309, and Asp339.

It belongs to the xylose isomerase family. In terms of assembly, homotetramer. Mg(2+) serves as cofactor.

Its subcellular location is the cytoplasm. It carries out the reaction alpha-D-xylose = alpha-D-xylulofuranose. The chain is Xylose isomerase from Salmonella dublin (strain CT_02021853).